The following is a 124-amino-acid chain: MATISQLVRNPRKDKVQKTSVPALEACPQKRGVCTRVYTTTPKKPNSAMRKVARVRLTNGFEVTSYIGGEGHNLQEHSVILIRGGRVKDLPGVRYHTVRGALDTSGVTARRKGRSKYGAKRPKA.

Residues 1 to 20 (MATISQLVRNPRKDKVQKTS) form a disordered region. 3-methylthioaspartic acid is present on D89. A disordered region spans residues 104–124 (TSGVTARRKGRSKYGAKRPKA). Residues 109–124 (ARRKGRSKYGAKRPKA) show a composition bias toward basic residues.

Belongs to the universal ribosomal protein uS12 family. Part of the 30S ribosomal subunit. Contacts proteins S8 and S17. May interact with IF1 in the 30S initiation complex.

Its function is as follows. With S4 and S5 plays an important role in translational accuracy. Functionally, interacts with and stabilizes bases of the 16S rRNA that are involved in tRNA selection in the A site and with the mRNA backbone. Located at the interface of the 30S and 50S subunits, it traverses the body of the 30S subunit contacting proteins on the other side and probably holding the rRNA structure together. The combined cluster of proteins S8, S12 and S17 appears to hold together the shoulder and platform of the 30S subunit. The chain is Small ribosomal subunit protein uS12 from Psychromonas ingrahamii (strain DSM 17664 / CCUG 51855 / 37).